The primary structure comprises 605 residues: Glucose oxidase (605 aa).

The first 16 residues, 1–16 (MKTILSSSLVVSMAAA), serve as a signal peptide directing secretion. FAD-binding residues include Leu51 and Thr52. Asn65 is a glycosylation site (N-linked (GlcNAc...) asparagine). Glu72 lines the FAD pocket. An N-linked (GlcNAc...) asparagine glycan is attached at Asn111. Residues Ser125, Asn129, Gly130, and Thr132 each contribute to the FAD site. A disulfide bond links Cys186 and Cys228. Residue Asn190 is glycosylated (N-linked (GlcNAc...) asparagine). Val272 contacts FAD. Asn280, Asn377, Asn410, and Asn495 each carry an N-linked (GlcNAc...) asparagine glycan. His538 functions as the Proton acceptor in the catalytic mechanism. Positions 559 and 560 each coordinate O2. The FAD site is built by Gly571 and Met583.

The protein belongs to the GMC oxidoreductase family. As to quaternary structure, homodimer. FAD is required as a cofactor.

It is found in the secreted. The protein resides in the cell wall. The protein localises to the cytoplasm. Its subcellular location is the extracellular space. It localises to the extracellular matrix. It carries out the reaction beta-D-glucose + O2 = D-glucono-1,5-lactone + H2O2. Functionally, glucose oxidase catalyzes the oxidation of beta-D-glucose to D-glucono-delta-lactone and hydrogen peroxide in the presence of molecular oxygen. Acts as a critical factor modulating pathogenicity by controlling transcription of genes important for fungal secondary metabolism and infection such as those coding for enzymes involved in degradation of the host cell wall. The sequence is that of Glucose oxidase from Aspergillus carbonarius (strain ITEM 5010).